Here is a 1563-residue protein sequence, read N- to C-terminus: Integrator complex subunit 5-like protein (1563 aa).

Composition is skewed to basic and acidic residues over residues 1–21 (MKEE…RNDN) and 31–44 (EDWR…KNEN). 3 disordered regions span residues 1 to 63 (MKEE…YDDD), 102 to 208 (KKSK…NITY), and 270 to 310 (NSLN…QQNP). The segment covering 52 to 63 (GDSDDDDYYDDD) has biased composition (acidic residues). Low complexity-rich tracts occupy residues 109-133 (TAAT…TATA) and 141-202 (NNLL…NNNN). A helical transmembrane segment spans residues 350–370 (DSIINWSLSTLTIITRLLIIL). Low complexity predominate over residues 381–398 (QQQQQQQQQQQQQQQQQQ). Disordered regions lie at residues 381-417 (QQQQ…RQPI), 466-498 (SKSS…SSKT), 637-694 (FDNN…DNSS), and 784-828 (ILNN…SQEI). The segment covering 405 to 414 (FPPPPPPPLR) has biased composition (pro residues). Low complexity-rich tracts occupy residues 468–496 (SSSS…SSSS), 639–686 (NNNN…NNNN), and 786–824 (NNNN…QQQQ). Residues 877-897 (IIIKLISLIGMDSIYSSLIIL) traverse the membrane as a helical segment. 2 disordered regions span residues 1154–1173 (SGNF…DEYG) and 1268–1303 (KQRM…DQNE). Residues 1160-1172 (GDDDDDEYGDDEY) are compositionally biased toward acidic residues. The span at 1277–1288 (SIQQNGNINNEQ) shows a compositional bias: low complexity. Residues 1289 to 1303 (QQEEDDNDDADDQNE) are compositionally biased toward acidic residues.

Belongs to the Integrator subunit 5 family. In terms of assembly, component of the Integrator complex. The core complex associates with protein phosphatase 2A subunits, to form the Integrator-PP2A (INTAC) complex.

It localises to the nucleus. The protein localises to the cytoplasm. The protein resides in the nucleus membrane. Component of the integrator complex, a multiprotein complex that terminates RNA polymerase II (Pol II) transcription in the promoter-proximal region of genes. The integrator complex provides a quality checkpoint during transcription elongation by driving premature transcription termination of transcripts that are unfavorably configured for transcriptional elongation: the complex terminates transcription by (1) catalyzing dephosphorylation of the C-terminal domain (CTD) of Pol II subunit polr2a, (2) degrading the exiting nascent RNA transcript via endonuclease activity and (3) promoting the release of Pol II from bound DNA. The integrator complex is also involved in terminating the synthesis of non-coding Pol II transcripts, such as enhancer RNAs (eRNAs), small nuclear RNAs (snRNAs), telomerase RNAs and long non-coding RNAs (lncRNAs). The chain is Integrator complex subunit 5-like protein from Dictyostelium discoideum (Social amoeba).